We begin with the raw amino-acid sequence, 1191 residues long: WASH complex subunit homolog 5 (1191 aa).

This sequence belongs to the strumpellin family. As to quaternary structure, component of the WASH complex.

Its subcellular location is the early endosome. Acts at least in part as component of the WASH complex which may regulate wash nucleation-promoting factor (NPF) activity and is required for its membrane targeting during endosomal sorting. During embryogenesis, not involved in the wash-dependent developmental migration of hemocytes anteriorly from the tail. This chain is WASH complex subunit homolog 5, found in Drosophila melanogaster (Fruit fly).